A 243-amino-acid chain; its full sequence is Linker for activation of T-cells family member 2 (243 aa).

At 1-5 (MSSGT) the chain is on the extracellular side. A helical; Signal-anchor for type III membrane protein membrane pass occupies residues 6–26 (ELLWPGAALLVLLGVAASLCV). Residues Cys-25 and Cys-28 are each lipidated (S-palmitoyl cysteine). Over 27-243 (RCSRPGAKRS…VNGEVAATEA (217 aa)) the chain is Cytoplasmic. At Ser-44 the chain carries Phosphoserine. Phosphotyrosine is present on Tyr-58. Phosphoserine occurs at positions 59 and 92. Phosphotyrosine occurs at positions 136, 193, and 233. A disordered region spans residues 174–243 (PTSGLCPSAS…VNGEVAATEA (70 aa)).

In terms of assembly, when phosphorylated, interacts with GRB2. May also interact with SOS1, GAB1 and CBL. Post-translationally, phosphorylated on tyrosines following cross-linking of BCR in B-cells, FCGR1 in myeloid cells, or FCER1 in mast cells; which induces the recruitment of GRB2. In terms of processing, may be polyubiquitinated. In terms of tissue distribution, highly expressed in spleen, peripheral blood lymphocytes, and germinal centers of lymph nodes. Also expressed in placenta, lung, pancreas and small intestine. Present in B-cells, NK cells and monocytes. Absent from T-cells (at protein level).

The protein resides in the cell membrane. Its function is as follows. Involved in FCER1 (high affinity immunoglobulin epsilon receptor)-mediated signaling in mast cells. May also be involved in BCR (B-cell antigen receptor)-mediated signaling in B-cells and FCGR1 (high affinity immunoglobulin gamma Fc receptor I)-mediated signaling in myeloid cells. Couples activation of these receptors and their associated kinases with distal intracellular events through the recruitment of GRB2. In Homo sapiens (Human), this protein is Linker for activation of T-cells family member 2 (LAT2).